The following is a 419-amino-acid chain: Dimethylallyltryptophan synthase 1 (419 aa).

The L-tryptophan site is built by Phe81, Met82, and Glu90. Phe81 lines the L-tyrosine pocket. 6 residues coordinate (2E)-geranyl diphosphate: Arg105, Lys187, Tyr189, Arg251, Lys253, and Tyr255. Positions 105, 187, 189, 251, 253, and 255 each coordinate dimethylallyl diphosphate. Arg257 is an L-tryptophan binding site. Arg257 lines the L-tyrosine pocket. (2E)-geranyl diphosphate contacts are provided by Lys332 and Tyr334. 2 residues coordinate dimethylallyl diphosphate: Lys332 and Tyr334. Residue Tyr389 coordinates L-tryptophan. Tyr389 contacts L-tyrosine. Tyr404 serves as a coordination point for (2E)-geranyl diphosphate.

The protein belongs to the tryptophan dimethylallyltransferase family.

The catalysed reaction is L-tyrosine + dimethylallyl diphosphate = 4-O-dimethylallyl-L-tyrosine + diphosphate. Functionally, dimethylallyltryptophan synthase; part of the DMATS1 gene cluster that mediates the biosynthesis of a reversely N-prenylated monomeric L-tryptophan (r-N-DMAT). DMATS1 catalyzes the reverse N-prenylation of L-Trp with DMAPP to yield N-dimethylallyl-L-tryptophan. DMATS1 exhibits unusually broad substrate specificity and can utilize geranyl diphosphate (GPP) or L-Tyr as an alternative prenyl donor or acceptor, respectively. Is able to catalyze both forward and reverse prenylation, i.e., at C1 or C3 of DMAPP; and it can catalyze C-N and C-O bond-forming reactions. The main product of the cluster is the reverse-N-dimethylallyl-L-tryptophan (r-N-DMAT) produced by the dimethylallyltryptophan synthase DMATS1 and it remains unclear whether this metabolite undergoes further modifications when silent gene clusters are activated. The acetylated form of r-N-DMAT, ac-r-N-DMAT, is also produced. The roles of the cytochrome P450 monooxygenase FFUJ_09176 and the methyltransferase FFUJ_09178 have still to be elucidated. The sequence is that of Dimethylallyltryptophan synthase 1 from Gibberella fujikuroi (strain CBS 195.34 / IMI 58289 / NRRL A-6831) (Bakanae and foot rot disease fungus).